The primary structure comprises 362 residues: 3-dehydroquinate synthase (362 aa).

Residues 71–76 (DGEQYK), 105–109 (GVVGD), 129–130 (TT), K142, K151, and 169–172 (CLKT) each bind NAD(+). Residues E184, H247, and H264 each coordinate Zn(2+).

The protein belongs to the sugar phosphate cyclases superfamily. Dehydroquinate synthase family. Co(2+) serves as cofactor. Zn(2+) is required as a cofactor. Requires NAD(+) as cofactor.

The protein localises to the cytoplasm. The enzyme catalyses 7-phospho-2-dehydro-3-deoxy-D-arabino-heptonate = 3-dehydroquinate + phosphate. It functions in the pathway metabolic intermediate biosynthesis; chorismate biosynthesis; chorismate from D-erythrose 4-phosphate and phosphoenolpyruvate: step 2/7. Functionally, catalyzes the conversion of 3-deoxy-D-arabino-heptulosonate 7-phosphate (DAHP) to dehydroquinate (DHQ). In Escherichia coli (strain 55989 / EAEC), this protein is 3-dehydroquinate synthase.